Here is a 603-residue protein sequence, read N- to C-terminus: UvrABC system protein C (603 aa).

The 78-residue stretch at 15 to 92 (DQPGCYLMKD…IKKHDPRFNI (78 aa)) folds into the GIY-YIG domain. A UVR domain is found at 197–232 (KTVKNDLMKKMQEAAENMEFEKAGEFRDQINAIETT).

This sequence belongs to the UvrC family. In terms of assembly, interacts with UvrB in an incision complex.

It localises to the cytoplasm. Its function is as follows. The UvrABC repair system catalyzes the recognition and processing of DNA lesions. UvrC both incises the 5' and 3' sides of the lesion. The N-terminal half is responsible for the 3' incision and the C-terminal half is responsible for the 5' incision. The chain is UvrABC system protein C from Listeria monocytogenes serotype 4b (strain F2365).